Here is a 124-residue protein sequence, read N- to C-terminus: Small ribosomal subunit protein uS12 (124 aa).

Residues 1 to 32 form a disordered region; the sequence is MPTIQQLVRKGRKDKATKTKTPALKGSPQRRG. Asp-89 bears the 3-methylthioaspartic acid mark. The disordered stretch occupies residues 105 to 124; the sequence is QGVRGRQQARSRYGAKKEKK. The span at 111-124 shows a compositional bias: basic residues; sequence QQARSRYGAKKEKK.

Belongs to the universal ribosomal protein uS12 family. In terms of assembly, part of the 30S ribosomal subunit. Contacts proteins S8 and S17. May interact with IF1 in the 30S initiation complex.

With S4 and S5 plays an important role in translational accuracy. In terms of biological role, interacts with and stabilizes bases of the 16S rRNA that are involved in tRNA selection in the A site and with the mRNA backbone. Located at the interface of the 30S and 50S subunits, it traverses the body of the 30S subunit contacting proteins on the other side and probably holding the rRNA structure together. The combined cluster of proteins S8, S12 and S17 appears to hold together the shoulder and platform of the 30S subunit. In Beutenbergia cavernae (strain ATCC BAA-8 / DSM 12333 / CCUG 43141 / JCM 11478 / NBRC 16432 / NCIMB 13614 / HKI 0122), this protein is Small ribosomal subunit protein uS12.